We begin with the raw amino-acid sequence, 584 residues long: 65 kDa membrane protein (584 aa).

The first 30 residues, 1–30 (MKFKSLITTTLALGVLASTGANFNNNEASA), serve as a signal peptide directing secretion. 5 MAP repeats span residues 45 to 154 (GYSK…EDKK), 156 to 265 (DKAN…ENKA), 266 to 374 (KRNY…KADR), 375 to 474 (YVPY…TGTK), and 475 to 584 (AKAD…KKNK).

The protein resides in the cell membrane. In terms of biological role, binds various plasma and ECM-proteins. This is 65 kDa membrane protein from Staphylococcus aureus (strain Newman).